Here is a 111-residue protein sequence, read N- to C-terminus: Cytochrome c (111 aa).

A1 is subject to N-acetylalanine. Positions 22, 25, and 26 each coordinate heme c. N6,N6,N6-trimethyllysine is present on K80. M88 contributes to the heme c binding site. K94 carries the post-translational modification N6,N6,N6-trimethyllysine.

It belongs to the cytochrome c family. In terms of processing, binds 1 heme c group covalently per subunit.

Its subcellular location is the mitochondrion intermembrane space. In terms of biological role, electron carrier protein. The oxidized form of the cytochrome c heme group can accept an electron from the heme group of the cytochrome c1 subunit of cytochrome reductase. Cytochrome c then transfers this electron to the cytochrome oxidase complex, the final protein carrier in the mitochondrial electron-transport chain. This Nigella damascena (Love-in-a-mist) protein is Cytochrome c.